A 207-amino-acid polypeptide reads, in one-letter code: Small ribosomal subunit protein uS4 (207 aa).

The interval 33-54 is disordered; the sequence is KLDSKPGQHGRTSGARTSDYGN. Over residues 42–53 the composition is skewed to polar residues; sequence GRTSGARTSDYG. An S4 RNA-binding domain is found at 97-160; that stretch reads SRLDNVVYRM…KKQVRIAEAL (64 aa).

This sequence belongs to the universal ribosomal protein uS4 family. In terms of assembly, part of the 30S ribosomal subunit. Contacts protein S5. The interaction surface between S4 and S5 is involved in control of translational fidelity.

Its function is as follows. One of the primary rRNA binding proteins, it binds directly to 16S rRNA where it nucleates assembly of the body of the 30S subunit. With S5 and S12 plays an important role in translational accuracy. This chain is Small ribosomal subunit protein uS4, found in Cupriavidus pinatubonensis (strain JMP 134 / LMG 1197) (Cupriavidus necator (strain JMP 134)).